The primary structure comprises 143 residues: Cytotoxic L-amino-acid oxidase (143 aa).

It belongs to the flavin monoamine oxidase family. It depends on FAD as a cofactor.

It carries out the reaction an L-alpha-amino acid + O2 + H2O = a 2-oxocarboxylate + H2O2 + NH4(+). Its function is as follows. Cytotoxic L-amino acid oxidase with high oxidase activity towards DL-methionine and L-methionine, L-phenylalanine, DL-norleucine, L-isoleucine, L-arginine, L-tyrosine, and DL-leucine. Shows relatively low activity towards DL-lysine and L-lysine, DL-asparagine, DL-valine, L-histidine, DL-threonine, DL-tryptophan, and L-glutamic acid; and no activity towards L-cysteine, L-glycine, L-proline, L-oxyproline, DL-serine, and DL-aspartic acid. Does not use benzylamine, ethanolamine, diethylamine, meta- and para-phenylendiamine, ortho-, meta- and para-aminophenols, or putrescin as a substrate. Acts as a toxin by inducing chromatin condensation, as well as DNA and nucleus fragmentation, which are typical for apoptosis. Probably induces cell damage indirectly via the generation of free radicals and oxidant agents that can trigger cell impairment and apoptosis by a caspase-independent pathway. This chain is Cytotoxic L-amino-acid oxidase, found in Amanita phalloides (Death cap).